The chain runs to 374 residues: Isocitrate dehydrogenase [NAD] catalytic subunit 6, mitochondrial (374 aa).

The transit peptide at 1-44 directs the protein to the mitochondrion; it reads MTMTAFLARRLIGNGSSQILGTSSSSSGPFISVSRAFFSSSTPI. Substrate contacts are provided by Arg-127, Arg-137, Arg-158, and Asp-245. Mg(2+)-binding residues include Asp-245, Asp-269, and Asp-273.

The protein belongs to the isocitrate and isopropylmalate dehydrogenases family. As to quaternary structure, heterooligomer of catalytic and regulatory subunits. Requires Mg(2+) as cofactor. The cofactor is Mn(2+). In terms of tissue distribution, ubiquitous. Predominantly expressed in leaves.

It is found in the mitochondrion. It carries out the reaction D-threo-isocitrate + NAD(+) = 2-oxoglutarate + CO2 + NADH. Functionally, catalytic subunit of the NAD(+)-dependent isocitrate dehydrogenase involved in the oxidative decarboxylation of isocitrate to 2-oxoglutarate. Performs an essential role in the oxidative function of the citric acid cycle. This chain is Isocitrate dehydrogenase [NAD] catalytic subunit 6, mitochondrial (IDH6), found in Arabidopsis thaliana (Mouse-ear cress).